The sequence spans 269 residues: Diphthine synthase (269 aa).

S-adenosyl-L-methionine is bound by residues Leu-10, Asp-87, Val-90, 115 to 116 (SI), Leu-166, Ala-209, and His-234.

The protein belongs to the diphthine synthase family. Homodimer.

The catalysed reaction is 2-[(3S)-amino-3-carboxypropyl]-L-histidyl-[translation elongation factor 2] + 3 S-adenosyl-L-methionine = diphthine-[translation elongation factor 2] + 3 S-adenosyl-L-homocysteine + 3 H(+). Its pathway is protein modification; peptidyl-diphthamide biosynthesis. In terms of biological role, S-adenosyl-L-methionine-dependent methyltransferase that catalyzes the trimethylation of the amino group of the modified target histidine residue in translation elongation factor 2 (EF-2), to form an intermediate called diphthine. The three successive methylation reactions represent the second step of diphthamide biosynthesis. The sequence is that of Diphthine synthase from Pyrococcus furiosus (strain ATCC 43587 / DSM 3638 / JCM 8422 / Vc1).